A 102-amino-acid polypeptide reads, in one-letter code: MAKQKIRIRLKAYDHRIIDQSAEKIVETAKRSGAEVSGPIPLPTEKTVYTIIRAVHKYKDSREQFEQRTHKRLIDIVNPTPKTVDALMGLNLPSGVDIEIKL.

This sequence belongs to the universal ribosomal protein uS10 family. Part of the 30S ribosomal subunit.

Functionally, involved in the binding of tRNA to the ribosomes. This Macrococcus caseolyticus (strain JCSC5402) (Macrococcoides caseolyticum) protein is Small ribosomal subunit protein uS10.